The primary structure comprises 343 residues: 3-dehydroquinate synthase (343 aa).

Residues 61–66 (SGEKYK), 95–96 (GV), 119–120 (TT), K132, K141, N142, and 159–162 (FLKT) contribute to the NAD(+) site. Positions 174, 231, and 248 each coordinate Zn(2+).

This sequence belongs to the sugar phosphate cyclases superfamily. Dehydroquinate synthase family. In terms of assembly, homodimer. The cofactor is NAD(+). Co(2+) serves as cofactor. Zn(2+) is required as a cofactor.

Its subcellular location is the cytoplasm. It catalyses the reaction 7-phospho-2-dehydro-3-deoxy-D-arabino-heptonate = 3-dehydroquinate + phosphate. Its pathway is metabolic intermediate biosynthesis; chorismate biosynthesis; chorismate from D-erythrose 4-phosphate and phosphoenolpyruvate: step 2/7. In terms of biological role, catalyzes the conversion of 3-deoxy-D-arabino-heptulosonate 7-phosphate (DAHP) to dehydroquinate (DHQ). The polypeptide is 3-dehydroquinate synthase (Helicobacter pylori (strain ATCC 700392 / 26695) (Campylobacter pylori)).